The sequence spans 193 residues: Biphenyl dioxygenase subunit beta (193 aa).

Belongs to the bacterial ring-hydroxylating dioxygenase beta subunit family. In terms of assembly, heterohexamer consisting of 3 BphA1 subunits and 3 BphA2 subunits. A ferredoxin (BphA3) and a ferredoxin reductase (BphA4) must be present to obtain activity.

It carries out the reaction biphenyl + NADH + O2 + H(+) = (2R,3S)-3-phenylcyclohexa-3,5-diene-1,2-diol + NAD(+). Its pathway is xenobiotic degradation; biphenyl degradation; 2-hydroxy-2,4-pentadienoate and benzoate from biphenyl: step 1/4. In terms of biological role, the beta subunit may be responsible for the substrate specificity of the enzyme. The protein is Biphenyl dioxygenase subunit beta (bphA2) of Pseudomonas sp. (strain KKS102).